The chain runs to 531 residues: Unconventional prefoldin RPB5 interactor (531 aa).

Residue Met1 is modified to N-acetylmethionine. 4 disordered regions span residues 1-24, 224-381, 408-470, and 500-531; these read MEPPSEPEPEPQPLAEASAAAPLR, ELES…ELPA, KSRS…SGVS, and TIPERKEVPSEVSEEPTKRVSKFRAARLQQRS. Positions 13–24 are enriched in low complexity; it reads PLAEASAAAPLR. 2 stretches are compositionally biased toward polar residues: residues 257–266 and 280–296; these read SPVTDSSAAS and GQVNSLNYSVNGSNSYH. Acidic residues predominate over residues 300–319; the sequence is DDDEEEEDDDDDDDEDDDNE. Ser369 carries the post-translational modification Phosphoserine; by RPS6KB1. The span at 414–424 shows a compositional bias: polar residues; it reads NSVCSDTSESS. Phosphoserine is present on Ser439.

This sequence belongs to the RNA polymerase II subunit 5-mediating protein family. Homodimer. Component of the PAQosome complex which is responsible for the biogenesis of several protein complexes and which consists of R2TP complex members RUVBL1, RUVBL2, RPAP3 and PIH1D1, URI complex members PFDN2, PFDN6, PDRG1, UXT and URI1 as well as ASDURF, POLR2E and DNAAF10/WDR92. Interacts with POLR2E/RPB5, RUVBL2 and RUVBL1. Interacts with PFDN2, PFDN4 and STAP1; the interactions are phosphorylation-dependent and occur in a growth-dependent manner in the mitochondrion. Interacts with UXT. Interacts with PPP1CC; the interaction is phosphorylation-dependent and occurs in a growth factor-dependent manner. Interacts (via the middle C-terminal region) with GTF2F1 and GTF2F2. Interacts with DMAP1. Interacts with TSC1 and TSC2. Interacts with PRPF8 and EFTUD2 in a ZNHIT2-dependent manner. In terms of processing, phosphorylation occurs in response to androgen treatment in prostate cancer cells in a mTOR-dependent manner. Phosphorylated; hyperhosphorylated in mitochondria in a mTORC-dependent signaling pathway. Phosphorylated at Ser-369 by RPS6KB1 in a growth factor- and rapamycin-dependent manner. S6K1-mediated mitochondrial phosphorylation at Ser-369 disrupts the URI1-PPP1CC complex in the mitochondrion, relieves PPP1CC phosphatase inhibition activity and hence engages a negative feedback diminishing RPS6KB1 kinase activity, preventing sustained S6K1-dependent signaling. Phosphorylated. Phosphorylation occurs essentially on serine residues. Expressed in the spinal cord, ganglia, choroid plexus and olfactors epithelium of the developing brain. Expressed in skin, lung, kidney, testis and muscles (at protein level). Expressed strongly in brain and kidney. Expressed weakly in skeletal muscle, lung and liver.

Its subcellular location is the nucleus. The protein resides in the cytoplasm. It localises to the mitochondrion. The protein localises to the cell projection. It is found in the dendrite. Its function is as follows. Involved in gene transcription regulation. Acts as a transcriptional repressor in concert with the corepressor UXT to regulate androgen receptor (AR) transcription. May act as a tumor suppressor to repress AR-mediated gene transcription and to inhibit anchorage-independent growth in prostate cancer cells. Required for cell survival in ovarian cancer cells. Together with UXT, associates with chromatin to the NKX3-1 promoter region. Plays a central role in maintaining S6K1 signaling and BAD phosphorylation under normal growth conditions thereby protecting cells from potential deleterious effects of sustained S6K1 signaling. The URI1-PPP1CC complex acts as a central component of a negative feedback mechanism that counteracts excessive S6K1 survival signaling to BAD in response to growth factors. Mediates inhibition of PPP1CC phosphatase activity in mitochondria. Coordinates the regulation of nutrient-sensitive gene expression availability in a mTOR-dependent manner. Seems to be a scaffolding protein able to assemble a prefoldin-like complex that contains PFDs and proteins with roles in transcription and ubiquitination. This is Unconventional prefoldin RPB5 interactor (Uri1) from Mus musculus (Mouse).